The primary structure comprises 612 residues: UvrABC system protein C (612 aa).

One can recognise a GIY-YIG domain in the interval 20-98 (THSGVYRMLD…IKQHRPKYNI (79 aa)). The UVR domain maps to 208 to 243 (SSVLEEISAKMYQASEDMEYEKAQVYRDQLVVLRKL).

This sequence belongs to the UvrC family. Interacts with UvrB in an incision complex.

It localises to the cytoplasm. Its function is as follows. The UvrABC repair system catalyzes the recognition and processing of DNA lesions. UvrC both incises the 5' and 3' sides of the lesion. The N-terminal half is responsible for the 3' incision and the C-terminal half is responsible for the 5' incision. This Francisella tularensis subsp. holarctica (strain FTNF002-00 / FTA) protein is UvrABC system protein C.